A 100-amino-acid polypeptide reads, in one-letter code: Urease subunit gamma (100 aa).

Belongs to the urease gamma subunit family. Heterotrimer of UreA (gamma), UreB (beta) and UreC (alpha) subunits. Three heterotrimers associate to form the active enzyme.

It is found in the cytoplasm. It carries out the reaction urea + 2 H2O + H(+) = hydrogencarbonate + 2 NH4(+). The protein operates within nitrogen metabolism; urea degradation; CO(2) and NH(3) from urea (urease route): step 1/1. The sequence is that of Urease subunit gamma from Pseudomonas aeruginosa (strain UCBPP-PA14).